The following is an 870-amino-acid chain: MNQIEQKWQQIWHDEKAFEVSNESSKPKYYVLAMLPYPSGKIHLGHVRNYSIGDVIARFMTMQGFNVLHPMGWDAFGLPAENAAIKNNSHPKDWTYSNIENMKKQLKSMGFSYAWSREINSCDPQYYKHEQKFFLELYERNLAYQKESLVNWDPVDNTVLANEQVVDGRGWRSGAVVEKRYLKQWFLKITDYAEELLNEIQNLKEWPEAVRSMQEKWIGKSIGANFHFKIKDNEDTTIEVFSTKPETIFGAGFIGIAFNHPIIERLVSKTPEISNFIAKCANITCSVELDKAEKEGVFTGLYVTHPFDSNIVLPVIITNFVLMDYGTGAVFGCPAHDERDHELAVKMNLTIKKVIETDIDVQKTPYTEDGILVNSNFLNGLTSNEAKQKVIEEFEKLEIGKCTINYRLKDWGISRQRFWGCPIPMIHCEACGIVPVPYKDLPVTLPDDVSFDGHGNPLAHHPSWKHVNCPKCNKPAIRETDTFDTFFESSWYFTRYCNSNATEMTDKKACDYWLPVDKYIGGIEHAVMHLLYARFFTKVMNEQHYVSVREPFKGLFTQGMVLHATYKDEHNNWLYPEEVVKKGNEFFRKESNDRVVQGRIEKMSKSKKNLIDLETMQKQYGADAIRLFVLSDSPPEKDLEWFVSGIEGCSRFINKLEQMFEAIKFLYNEANKEEFEGNTERSTAAYTLVREDASTGSMYKLPLEASYINKELNRLVHFTIKHVAEDIKHFALNRAIARMRELANAISSEISKDKIDVNTVRHGFNILVQLLNPFIPHITEEIWQKLGNKERLYKSDFPAFDESMLELDTYIMAVQVNGKLRDTYKFKTAASEDAIKQITVNLPKVQKFLAGKEPKKIILVPRKIVNIIVN.

Residues 36-46 (PYPSGKIHLGH) carry the 'HIGH' region motif. Positions 602–606 (KMSKS) match the 'KMSKS' region motif. K605 contacts ATP.

The protein belongs to the class-I aminoacyl-tRNA synthetase family.

Its subcellular location is the cytoplasm. The enzyme catalyses tRNA(Leu) + L-leucine + ATP = L-leucyl-tRNA(Leu) + AMP + diphosphate. The polypeptide is Leucine--tRNA ligase (Rickettsia akari (strain Hartford)).